Consider the following 356-residue polypeptide: Magnesium-protoporphyrin IX monomethyl ester [oxidative] cyclase (356 aa).

This sequence belongs to the AcsF family. The cofactor is Fe cation.

The enzyme catalyses Mg-protoporphyrin IX 13-monomethyl ester + 3 NADPH + 3 O2 + 2 H(+) = 3,8-divinyl protochlorophyllide a + 3 NADP(+) + 5 H2O. Its pathway is porphyrin-containing compound metabolism; chlorophyll biosynthesis (light-independent). Catalyzes the formation of the isocyclic ring in chlorophyll biosynthesis. Mediates the cyclase reaction, which results in the formation of divinylprotochlorophyllide (Pchlide) characteristic of all chlorophylls from magnesium-protoporphyrin IX 13-monomethyl ester (MgPMME). The sequence is that of Magnesium-protoporphyrin IX monomethyl ester [oxidative] cyclase from Parasynechococcus marenigrum (strain WH8102).